We begin with the raw amino-acid sequence, 96 residues long: Large ribosomal subunit protein uL23 (96 aa).

This sequence belongs to the universal ribosomal protein uL23 family. In terms of assembly, part of the 50S ribosomal subunit. Contacts protein L29, and trigger factor when it is bound to the ribosome.

Its function is as follows. One of the early assembly proteins it binds 23S rRNA. One of the proteins that surrounds the polypeptide exit tunnel on the outside of the ribosome. Forms the main docking site for trigger factor binding to the ribosome. The chain is Large ribosomal subunit protein uL23 from Aster yellows witches'-broom phytoplasma (strain AYWB).